A 369-amino-acid polypeptide reads, in one-letter code: Short chain dehydrogenase rstn4 (369 aa).

NADP(+)-binding residues include Lys88, Asp111, Asn138, Tyr234, and Lys238. Catalysis depends on Tyr234, which acts as the Proton donor. Lys238 functions as the Lowers pKa of active site Tyr in the catalytic mechanism.

The protein belongs to the short-chain dehydrogenases/reductases (SDR) family.

The protein operates within antifungal biosynthesis. Its function is as follows. Short chain dehydrogenase; part of the gene cluster that mediates the biosynthesis of the tetrahydropyranyl antifungal agent restricticin that acts as an inhibitor of CYP51 and blocks the ergosterol biosynthesis. The highly reducing polyketide synthase rstn3, the short chain dehydrogenase rstn4, the cyclase rstn5, the FAD-dependent monooxygenase rstn6 and the enoylreductase rstn7 are required to generate the first stable intermediate desmethylrestrictinol. Rstn3 with rstn7 biosynthesize the first polyketide chain intermediate that is reduced by rstn4, followed by epoxidation by rstn6 before 6-endo cyclization via epoxide opening by rstn5 leads to desmethylrestrictinol. The methyltransferase rstn1 then catalyzes the C4 O-methylation of desmethylrestrictinol to produce restrictinol, and the nonribosomal peptide synthetase rstn8 catalyzes the C3 esterification of restrictinol with glycine that leads to restricticin. This Aspergillus nomiae NRRL (strain ATCC 15546 / NRRL 13137 / CBS 260.88 / M93) protein is Short chain dehydrogenase rstn4.